The primary structure comprises 79 residues: uncharacterized protein (79 aa).

The next 2 membrane-spanning stretches (helical) occupy residues 28 to 48 and 51 to 71; these read CIIL…ALLA and VALT…AFTV.

It localises to the cell membrane. This is an uncharacterized protein from Methanocaldococcus jannaschii (strain ATCC 43067 / DSM 2661 / JAL-1 / JCM 10045 / NBRC 100440) (Methanococcus jannaschii).